Reading from the N-terminus, the 859-residue chain is Anoctamin-7 (859 aa).

Over 1 to 297 (MLRGQAREED…YFAWLGFYTG (297 aa)) the chain is Cytoplasmic. The tract at residues 25 to 50 (GCSYGSTAQASEAGKQQVAPSRVGSS) is disordered. The helical transmembrane segment at 298 to 318 (WLLPAAVVGTVVFLVGCFLVF) threads the bilayer. Residues 319 to 362 (SDIPTQELCHSSDSFDMCPLCSDCSFWLLSSACTLAQAGRLFDH) are Extracellular-facing. Residues 363-383 (GGTVFFSLFMALWAVLLLEYW) form a helical membrane-spanning segment. Over 384–441 (KRKNATLAYRWDCSDYEDIEERPRPQFAATAPMTALNPITGEDEPYFPEKNRVRRMLA) the chain is Cytoplasmic. The chain crosses the membrane as a helical span at residues 442–462 (GSVVLLMMVAVVIMCLVSVIL). Residues 463-492 (YRAVMAIIVSRSDNAFLSAWASRIASLTGS) lie on the Extracellular side of the membrane. A helical transmembrane segment spans residues 493–513 (VVNLVFILILSKVYVLLAQVL). The Cytoplasmic segment spans residues 514 to 530 (TRWEMHRTQTEFEDAFT). Residues 531-551 (LKVFIFQFVNFYASPVYIAFF) traverse the membrane as a helical segment. Residues 552–651 (KGRFVGYPGN…FHEYLEMVLQ (100 aa)) are Extracellular-facing. Residues 652-672 (FGFVTIFVAACPLAPLFALLN) form a helical membrane-spanning segment. The Cytoplasmic segment spans residues 673 to 700 (NWVEIRLDARKFVCEYRRPVAERAQDIG). Residues 701 to 721 (IWFHILTGLTHLAVISNAFLL) form a helical membrane-spanning segment. The Extracellular portion of the chain corresponds to 722-780 (AFSSDFLPRVYYSWTHAPDLHGFLNFTLARAPPTFTSAHNRTCRYRAFRDDDGHYSPTY). N-linked (GlcNAc...) asparagine glycosylation is found at N746 and N761. Residues 781–801 (WTLLAIRLAFVIVFEHVVFSI) traverse the membrane as a helical segment. At 802–859 (GRVLDLLVPDIPESVEIKVKREYYLAKQALAENEALLGATGVKDDQPPSSEPSLGLPA) the chain is on the cytoplasmic side.

This sequence belongs to the anoctamin family. Highly expressed in the stomach. Expressed at low levels in small intestine and large intestine.

Its subcellular location is the cell membrane. It localises to the endoplasmic reticulum. It catalyses the reaction a 1,2-diacyl-sn-glycero-3-phospho-L-serine(in) = a 1,2-diacyl-sn-glycero-3-phospho-L-serine(out). The catalysed reaction is a beta-D-galactosyl-(1&lt;-&gt;1')-N-acylsphing-4-enine(out) = a beta-D-galactosyl-(1&lt;-&gt;1')-N-acylsphing-4-enine(in). The enzyme catalyses a 1,2-diacyl-sn-glycero-3-phosphocholine(in) = a 1,2-diacyl-sn-glycero-3-phosphocholine(out). Has calcium-dependent phospholipid scramblase activity; scrambles phosphatidylserine, phosphatidylcholine and galactosylceramide. Does not exhibit calcium-activated chloride channel (CaCC) activity. May play a role in cell-cell interactions. In Mus musculus (Mouse), this protein is Anoctamin-7 (Ano7).